The chain runs to 519 residues: Protein twist (519 aa).

4 disordered regions span residues 53-77 (MQQQQQQQQHQQQQQQHQQQQQQQY), 131-156 (NFEQQQQQQQQQQQQQTATPAGVATA), 301-321 (YEAYDPANSLNGSTYSSSDRD), and 368-389 (FRKPRRRLKRKPSKTEETDEFS). 2 stretches are compositionally biased toward low complexity: residues 54 to 76 (QQQQQQQQHQQQQQQHQQQQQQQ) and 134 to 146 (QQQQQQQQQQQQQ). A compositionally biased stretch (polar residues) spans 308-317 (NSLNGSTYSS). The span at 368–379 (FRKPRRRLKRKP) shows a compositional bias: basic residues. The bHLH domain occupies 390-441 (NQRVMANVRERQRTQSLNDAFKALQQIIPTLPSDKLSKIQTLKLATRYIDFL).

As to quaternary structure, efficient DNA binding requires dimerization with another bHLH protein. Homodimer.

Its subcellular location is the nucleus. Functionally, involved in the establishment and dorsoventral patterning of germ layers in the embryo. This chain is Protein twist, found in Drosophila virilis (Fruit fly).